A 406-amino-acid polypeptide reads, in one-letter code: Olfactomedin-like protein 3 (406 aa).

A signal peptide spans 1–21; that stretch reads MGPSTPLLILFLLSWSGPLQG. The stretch at 25–101 forms a coiled coil; that stretch reads HLVEYMERRL…REVDYLETQN (77 aa). Residues 134–401 enclose the Olfactomedin-like domain; that stretch reads DCGYTISQVR…QIVYKLEMRK (268 aa). A disulfide bridge connects residues C135 and C328. N177 and N248 each carry an N-linked (GlcNAc...) asparagine glycan.

Belongs to the OLFML3 family. In terms of tissue distribution, abundant in placenta, moderate in liver and heart, whereas fairly weak in other tissues examined. On term placenta, mainly localized extracellularly surrounding the syncytiotrophoblastic cells and very rarely expressed in the maternal decidua layer.

It is found in the secreted. In terms of biological role, secreted scaffold protein that plays an essential role in dorsoventral patterning during early development. Stabilizes axial formation by restricting chordin (CHRD) activity on the dorsal side. Acts by facilitating the association between the tolloid proteases and their substrate chordin (CHRD), leading to enhance chordin (CHRD) degradation. May have matrix-related function involved in placental and embryonic development, or play a similar role in other physiological processes. The sequence is that of Olfactomedin-like protein 3 (OLFML3) from Homo sapiens (Human).